A 178-amino-acid polypeptide reads, in one-letter code: Large ribosomal subunit protein uL5 (178 aa).

The protein belongs to the universal ribosomal protein uL5 family. Part of the 50S ribosomal subunit; part of the 5S rRNA/L5/L18/L25 subcomplex. Contacts the 5S rRNA and the P site tRNA. Forms a bridge to the 30S subunit in the 70S ribosome.

Its function is as follows. This is one of the proteins that bind and probably mediate the attachment of the 5S RNA into the large ribosomal subunit, where it forms part of the central protuberance. In the 70S ribosome it contacts protein S13 of the 30S subunit (bridge B1b), connecting the 2 subunits; this bridge is implicated in subunit movement. Contacts the P site tRNA; the 5S rRNA and some of its associated proteins might help stabilize positioning of ribosome-bound tRNAs. This chain is Large ribosomal subunit protein uL5, found in Prochlorococcus marinus subsp. pastoris (strain CCMP1986 / NIES-2087 / MED4).